The following is a 203-amino-acid chain: Large ribosomal subunit protein eL15 (203 aa).

The disordered stretch occupies residues glutamate 160 to glycine 186. The span at lysine 169–glycine 186 shows a compositional bias: basic residues.

It belongs to the eukaryotic ribosomal protein eL15 family. In terms of assembly, component of the large ribosomal subunit (LSU). Mature N.crassa ribosomes consist of a small (40S) and a large (60S) subunit. The 40S small subunit contains 1 molecule of ribosomal RNA (18S rRNA) and at least 32 different proteins. The large 60S subunit contains 3 rRNA molecules (26S, 5.8S and 5S rRNA) and at least 42 different proteins.

It is found in the cytoplasm. In terms of biological role, component of the ribosome, a large ribonucleoprotein complex responsible for the synthesis of proteins in the cell. The small ribosomal subunit (SSU) binds messenger RNAs (mRNAs) and translates the encoded message by selecting cognate aminoacyl-transfer RNA (tRNA) molecules. The large subunit (LSU) contains the ribosomal catalytic site termed the peptidyl transferase center (PTC), which catalyzes the formation of peptide bonds, thereby polymerizing the amino acids delivered by tRNAs into a polypeptide chain. The nascent polypeptides leave the ribosome through a tunnel in the LSU and interact with protein factors that function in enzymatic processing, targeting, and the membrane insertion of nascent chains at the exit of the ribosomal tunnel. This chain is Large ribosomal subunit protein eL15 (rpl-15), found in Neurospora crassa (strain ATCC 24698 / 74-OR23-1A / CBS 708.71 / DSM 1257 / FGSC 987).